We begin with the raw amino-acid sequence, 313 residues long: Homoserine O-succinyltransferase (313 aa).

Cys142 acts as the Acyl-thioester intermediate in catalysis. Lys163 and Ser192 together coordinate substrate. His235 (proton acceptor) is an active-site residue. The active site involves Glu237. Arg249 contributes to the substrate binding site.

This sequence belongs to the MetA family.

It is found in the cytoplasm. It catalyses the reaction L-homoserine + succinyl-CoA = O-succinyl-L-homoserine + CoA. It participates in amino-acid biosynthesis; L-methionine biosynthesis via de novo pathway; O-succinyl-L-homoserine from L-homoserine: step 1/1. In terms of biological role, transfers a succinyl group from succinyl-CoA to L-homoserine, forming succinyl-L-homoserine. The chain is Homoserine O-succinyltransferase from Vibrio vulnificus (strain CMCP6).